The following is a 449-amino-acid chain: Deoxyguanosinetriphosphate triphosphohydrolase-like protein (449 aa).

The segment at 1–27 (MTSSVWQERRHGEDKQRRNDHRSPYQR) is disordered. The segment covering 7–27 (QERRHGEDKQRRNDHRSPYQR) has biased composition (basic and acidic residues). The region spanning 59–255 (RLTHSLEVSQ…MELADDIAYA (197 aa)) is the HD domain.

The protein belongs to the dGTPase family. Type 2 subfamily.

The chain is Deoxyguanosinetriphosphate triphosphohydrolase-like protein from Shewanella baltica (strain OS223).